The primary structure comprises 77 residues: Acyl carrier protein (77 aa).

Residues methionine 1 to asparagine 76 enclose the Carrier domain. An O-(pantetheine 4'-phosphoryl)serine modification is found at serine 36.

This sequence belongs to the acyl carrier protein (ACP) family. Post-translationally, 4'-phosphopantetheine is transferred from CoA to a specific serine of apo-ACP by AcpS. This modification is essential for activity because fatty acids are bound in thioester linkage to the sulfhydryl of the prosthetic group.

It localises to the cytoplasm. The protein operates within lipid metabolism; fatty acid biosynthesis. Functionally, carrier of the growing fatty acid chain in fatty acid biosynthesis. The polypeptide is Acyl carrier protein (Actinobacillus pleuropneumoniae serotype 5b (strain L20)).